We begin with the raw amino-acid sequence, 333 residues long: Protoheme IX farnesyltransferase (333 aa).

7 helical membrane-spanning segments follow: residues 64 to 84 (LICT…LNCL), 110 to 130 (TVFL…VSGV), 133 to 153 (LAAG…TVIL), 161 to 181 (IVFG…AATG), 189 to 209 (WLFG…AILL), 246 to 266 (IMGV…LLPF), and 287 to 307 (AKSL…LLLI).

Belongs to the UbiA prenyltransferase family. Protoheme IX farnesyltransferase subfamily.

The protein resides in the cell inner membrane. It catalyses the reaction heme b + (2E,6E)-farnesyl diphosphate + H2O = Fe(II)-heme o + diphosphate. It functions in the pathway porphyrin-containing compound metabolism; heme O biosynthesis; heme O from protoheme: step 1/1. Converts heme B (protoheme IX) to heme O by substitution of the vinyl group on carbon 2 of heme B porphyrin ring with a hydroxyethyl farnesyl side group. This Prochlorococcus marinus (strain MIT 9215) protein is Protoheme IX farnesyltransferase.